A 463-amino-acid polypeptide reads, in one-letter code: Mitochondrial distribution and morphology protein 10 (463 aa).

It belongs to the MDM10 family. In terms of assembly, component of the ER-mitochondria encounter structure (ERMES) or MDM complex, composed of MMM1, MDM10, MDM12 and MDM34. Associates with the mitochondrial outer membrane sorting assembly machinery SAM(core) complex.

It localises to the mitochondrion outer membrane. Component of the ERMES/MDM complex, which serves as a molecular tether to connect the endoplasmic reticulum and mitochondria. Components of this complex are involved in the control of mitochondrial shape and protein biogenesis and may function in phospholipid exchange. MDM10 is involved in the late assembly steps of the general translocase of the mitochondrial outer membrane (TOM complex). Functions in the TOM40-specific route of the assembly of outer membrane beta-barrel proteins, including the association of TOM40 with the receptor TOM22 and small TOM proteins. Can associate with the SAM(core) complex as well as the MDM12-MMM1 complex, both involved in late steps of the major beta-barrel assembly pathway, that is responsible for biogenesis of all outer membrane beta-barrel proteins. May act as a switch that shuttles between both complexes and channels precursor proteins into the TOM40-specific pathway. Plays a role in mitochondrial morphology and in the inheritance of mitochondria. The protein is Mitochondrial distribution and morphology protein 10 of Candida dubliniensis (strain CD36 / ATCC MYA-646 / CBS 7987 / NCPF 3949 / NRRL Y-17841) (Yeast).